A 37-amino-acid polypeptide reads, in one-letter code: MKVRPSVKPICEKCKVIRRRGKVMIICENPKHKQRQG.

This sequence belongs to the bacterial ribosomal protein bL36 family.

The polypeptide is Large ribosomal subunit protein bL36 (Geobacillus kaustophilus (strain HTA426)).